We begin with the raw amino-acid sequence, 692 residues long: MSRTLFVTTALPYANGSFHIGHIMEYIQADIWVRSMRMAGHTVHFVGADDAHGAPIMLKAEKEGITPQALVARYAAERPRYLDGFHIRFDHWHSTDTPENVALSQEIYRALKSEGLIETRSIEQFYDPVKGMFLADRYIKGECPRCHAKDQYGDSCEVCGAVYAPTELINPYSALTGAAPVLKSSDHFFFKLSDPRCVEFLQQWTTGANRQGVKHLQAEVQAKTREWLVGDDGEAKLGDWDISRDAPYFGIEIPDAPGKYFYVWLDAPVGYLASLKSYCAAKGLDFDALLDPAGPTEQVHFIGKDIIYFHALFWPAMLKFAGRKTPDQLNVHGFITVSGEKMSKSRGTGISPLRYLEIGMDAEWLRYYMAAKLNARVEDMDFNPEDFVARVNSDLVGKYVNIASRAAAFITRHFDGELAYDGDTDALAAEFAQQAESIRAAFEAREYNRAVREIMAHADRINQAFDAAQPWVMAKGIGAADAATRARLQDICSRALAGFKALSVMLAPVLPALASRVARELFGANADFAWGDAQQLPQRVAPFKHLMQRVDPKLLDDLFEPPAAEASAPAALPGGEALADTITIDDFAKIDLRIARIVNCEEVEGSTKLLRLTLDVGEGRHRNVFSGIKSAYQPQDLVGKLTVLVANLAPRKMKFGVSEGMVLAASHADEKAEPGIYVLEPWPGAQPGMRVR.

The short motif at 12 to 22 (PYANGSFHIGH) is the 'HIGH' region element. 4 residues coordinate Zn(2+): Cys143, Cys146, Cys156, and Cys159. A 'KMSKS' region motif is present at residues 341 to 345 (KMSKS). Lys344 is a binding site for ATP. The 107-residue stretch at 586–692 (DFAKIDLRIA…PGAQPGMRVR (107 aa)) folds into the tRNA-binding domain.

This sequence belongs to the class-I aminoacyl-tRNA synthetase family. MetG type 1 subfamily. As to quaternary structure, homodimer. It depends on Zn(2+) as a cofactor.

It is found in the cytoplasm. It carries out the reaction tRNA(Met) + L-methionine + ATP = L-methionyl-tRNA(Met) + AMP + diphosphate. Its function is as follows. Is required not only for elongation of protein synthesis but also for the initiation of all mRNA translation through initiator tRNA(fMet) aminoacylation. The chain is Methionine--tRNA ligase from Bordetella pertussis (strain Tohama I / ATCC BAA-589 / NCTC 13251).